The sequence spans 493 residues: MSNWDTKFLKKGYTFDDVLLIPAESHVLPNEVDLKTKLADNLTLNIPIITAAMDTVTGSKMAIAIARAGGLGVIHKNMSITEQAEEVRKVKRSENGVIIDPFFLTPEHKVSEAEELMQRYRISGVPIVETLANRKLVGIITNRDMRFISNYNAPISEHMTSEHLVTAAVGTDLETAERILHEHRIEKLPLVDNSGRLSGLITIKDIEKVIEFPHAAKDEFGRLLVAAAVGVTSDTFERAEALFEAGADAIVIDTAHGHSAGVLRKIAEIRAHFPNRTLIAGNIATAEGARALYDAGVDVVKVGIGPGSICTTRVVAGVGVPQVTAIYDAAAVAREYGKTIIADGGIKYSGDIVKALAAGGNAVMLGSMFAGTDEAPGETEIYQGRKFKTYRGMGSIAAMKKGSSDRYFQGSVNEANKLVPEGIEGRVAYKGAASDIVFQMLGGIRSGMGYVGAGDIQELHENAQFVEMSGAGLIESHPHDVQITNEAPNYSVH.

CBS domains are found at residues 97-155 (VIID…NAPI) and 159-219 (MTSE…AKDE). Residues Asp-253 and 303–305 (GIG) each bind NAD(+). K(+) is bound by residues Gly-305 and Gly-307. Ser-308 lines the IMP pocket. Position 310 (Cys-310) interacts with K(+). Cys-310 functions as the Thioimidate intermediate in the catalytic mechanism. IMP is bound by residues 343 to 345 (DGG), 366 to 367 (GS), and 390 to 394 (YRGMG). Arg-406 (proton acceptor) is an active-site residue. Glu-421 is a binding site for IMP. Residues Glu-475, Ser-476, and His-477 each coordinate K(+).

Belongs to the IMPDH/GMPR family. As to quaternary structure, homotetramer. K(+) is required as a cofactor.

The enzyme catalyses IMP + NAD(+) + H2O = XMP + NADH + H(+). It participates in purine metabolism; XMP biosynthesis via de novo pathway; XMP from IMP: step 1/1. With respect to regulation, mycophenolic acid (MPA) is a non-competitive inhibitor that prevents formation of the closed enzyme conformation by binding to the same site as the amobile flap. In contrast, mizoribine monophosphate (MZP) is a competitive inhibitor that induces the closed conformation. MPA is a potent inhibitor of mammalian IMPDHs but a poor inhibitor of the bacterial enzymes. MZP is a more potent inhibitor of bacterial IMPDH. In terms of biological role, catalyzes the conversion of inosine 5'-phosphate (IMP) to xanthosine 5'-phosphate (XMP), the first committed and rate-limiting step in the de novo synthesis of guanine nucleotides, and therefore plays an important role in the regulation of cell growth. The polypeptide is Inosine-5'-monophosphate dehydrogenase (Streptococcus pyogenes serotype M3 (strain ATCC BAA-595 / MGAS315)).